The sequence spans 869 residues: Bifunctional uridylyltransferase/uridylyl-removing enzyme (869 aa).

A uridylyltransferase region spans residues 1-332; the sequence is MTDAPAERPD…QFDGEATPES (332 aa). The uridylyl-removing stretch occupies residues 333–691; sequence LGGGFSLRRG…RRAVPDNDAL (359 aa). One can recognise an HD domain in the interval 450–572; that stretch reads VDQHTLMVLR…VGTRERLDYL (123 aa). 2 consecutive ACT domains span residues 692 to 774 and 798 to 869; these read EVFV…RAVP and RISL…LDPV.

It belongs to the GlnD family. Requires Mg(2+) as cofactor.

It carries out the reaction [protein-PII]-L-tyrosine + UTP = [protein-PII]-uridylyl-L-tyrosine + diphosphate. The enzyme catalyses [protein-PII]-uridylyl-L-tyrosine + H2O = [protein-PII]-L-tyrosine + UMP + H(+). Uridylyltransferase (UTase) activity is inhibited by glutamine, while glutamine activates uridylyl-removing (UR) activity. In terms of biological role, modifies, by uridylylation and deuridylylation, the PII regulatory proteins (GlnB and homologs), in response to the nitrogen status of the cell that GlnD senses through the glutamine level. Under low glutamine levels, catalyzes the conversion of the PII proteins and UTP to PII-UMP and PPi, while under higher glutamine levels, GlnD hydrolyzes PII-UMP to PII and UMP (deuridylylation). Thus, controls uridylylation state and activity of the PII proteins, and plays an important role in the regulation of nitrogen assimilation and metabolism. This chain is Bifunctional uridylyltransferase/uridylyl-removing enzyme, found in Xanthomonas oryzae pv. oryzae (strain MAFF 311018).